We begin with the raw amino-acid sequence, 122 residues long: UPF0382 membrane protein SAB0533 (122 aa).

Helical transmembrane passes span 3–23 (LFII…AFGA), 46–66 (MYHG…SINV), 69–89 (AGWL…ILVL), and 98–118 (ITPI…IATF).

It belongs to the UPF0382 family.

The protein localises to the cell membrane. This Staphylococcus aureus (strain bovine RF122 / ET3-1) protein is UPF0382 membrane protein SAB0533.